The following is a 188-amino-acid chain: GTPase KRas (188 aa).

The residue at position 1 (Met-1) is an N-acetylmethionine. Thr-2 carries the post-translational modification N-acetylthreonine; in GTPase KRas, N-terminally processed. GTP-binding positions include 10–18 (GAGGVGKSA), 29–35 (VDEYDPT), and 59–60 (AG). The Effector region signature appears at 32–40 (YDPTIEDSY). N6-acetyllysine is present on Lys-104. GTP is bound at residue 116 to 119 (NKCD). Positions 166 to 185 (HKEKMSKDGKKKKKKSKTKC) are hypervariable region. The interval 167–188 (KEKMSKDGKKKKKKSKTKCIIM) is disordered. Cys-185 bears the Cysteine methyl ester mark. A lipid anchor (S-farnesyl cysteine) is attached at Cys-185. Residues 186–188 (IIM) constitute a propeptide, removed in mature form.

The protein belongs to the small GTPase superfamily. Ras family. As to quaternary structure, interacts with PHLPP. Interacts (active GTP-bound form preferentially) with RGS14. Interacts (when farnesylated) with PDE6D; this promotes dissociation from the cell membrane. Interacts with SOS1. Interacts (when farnesylated) with GPR31. Interacts with RAP1GDS1. Interacts (active GTP-bound form) with both SHOC2 and PP1c (all isoforms) to form a tertiary complex; SHOC2 and PP1c preferably bind M-Ras/MRAS, but they also bind K-Ras/KRAS, N-Ras/NRAS and H-Ras/HRAS. Interacts (GTP-bound form) with MAPKAP1/SIN1; inhibiting K-Ras/KRAS activity. Post-translationally, acetylation at Lys-104 prevents interaction with guanine nucleotide exchange factors (GEFs).

The protein resides in the cell membrane. The protein localises to the cytoplasm. It is found in the cytosol. It carries out the reaction GTP + H2O = GDP + phosphate + H(+). Alternates between an inactive form bound to GDP and an active form bound to GTP. Activated by a guanine nucleotide-exchange factor (GEF) and inactivated by a GTPase-activating protein (GAP). Interaction with SOS1 promotes exchange of bound GDP to GTP. In terms of biological role, ras proteins bind GDP/GTP and possess intrinsic GTPase activity. Plays an important role in the regulation of cell proliferation. Plays a role in promoting oncogenic events by inducing transcriptional silencing of tumor suppressor genes (TSGs) in colorectal cancer (CRC) cells in a ZNF304-dependent manner. The polypeptide is GTPase KRas (KRAS) (Monodelphis domestica (Gray short-tailed opossum)).